A 101-amino-acid polypeptide reads, in one-letter code: Small ribosomal subunit protein uS14A (101 aa).

A disordered region spans residues 29 to 73; the sequence is AIISSPSTPADARAAAQSELNRQPRDASPVRVRNRDAVDGRPRGH. Positions 61 to 70 are enriched in basic and acidic residues; the sequence is RNRDAVDGRP.

This sequence belongs to the universal ribosomal protein uS14 family. As to quaternary structure, part of the 30S ribosomal subunit. Contacts proteins S3 and S10.

In terms of biological role, binds 16S rRNA, required for the assembly of 30S particles and may also be responsible for determining the conformation of the 16S rRNA at the A site. The protein is Small ribosomal subunit protein uS14A of Mycolicibacterium gilvum (strain PYR-GCK) (Mycobacterium gilvum (strain PYR-GCK)).